Here is a 233-residue protein sequence, read N- to C-terminus: Small ribosomal subunit protein uS2 (233 aa).

It belongs to the universal ribosomal protein uS2 family.

The polypeptide is Small ribosomal subunit protein uS2 (Prochlorococcus marinus (strain MIT 9312)).